A 620-amino-acid polypeptide reads, in one-letter code: Somatic embryogenesis receptor kinase 4 (620 aa).

A signal peptide spans M1–G33. Residues D34–G234 are Extracellular-facing. LRR repeat units lie at residues N100–L122, E124–L146, K148–V170, Q171–S193, and L194–S215. N110 carries an N-linked (GlcNAc...) asparagine glycan. 3 N-linked (GlcNAc...) asparagine glycosylation sites follow: N156, N189, and N202. A disordered region spans residues L205–Q227. Residues P209–S224 are compositionally biased toward pro residues. The helical transmembrane segment at G235–L255 threads the bilayer. Residues R256–R620 are Cytoplasmic-facing. T291 carries the phosphothreonine modification. Residues F294–N591 form the Protein kinase domain. A Phosphoserine modification is found at S295. ATP contacts are provided by residues L300–V308 and K322. Phosphoserine occurs at positions 375 and 378. D421 serves as the catalytic Proton acceptor. Phosphothreonine is present on residues T454, T455, and T460. A Phosphotyrosine modification is found at Y468. Residue S470 is modified to Phosphoserine. T471 carries the post-translational modification Phosphothreonine. S475 is modified (phosphoserine). T551 is subject to Phosphothreonine.

Belongs to the protein kinase superfamily. Ser/Thr protein kinase family. In terms of assembly, interacts with the EF-Tu receptor EFR and FLS2 in a specific ligand-induced manner. Interacts with TMK4/BARK1. Interacts with ERECTA in a EPF2-induced manner. Interacts with ERL1 in a EPF1-induced manner. Interacts with TMM. Forms a complex with MIK2 in response to SCOOP12 perception. Post-translationally, autophosphorylated on Thr and Tyr residues.

It localises to the cell membrane. The catalysed reaction is L-seryl-[protein] + ATP = O-phospho-L-seryl-[protein] + ADP + H(+). It carries out the reaction L-threonyl-[protein] + ATP = O-phospho-L-threonyl-[protein] + ADP + H(+). It catalyses the reaction L-tyrosyl-[protein] + ATP = O-phospho-L-tyrosyl-[protein] + ADP + H(+). Functionally, dual specificity kinase acting on both serine/threonine- and tyrosine-containing substrates. Positively regulates the BR-dependent plant growth pathway and negatively regulates the BR-independent cell-death pathway. Required during SCOOP small peptides (e.g. SCOOP10 and SCOOP12) perception and signaling; associates with MIK2 as a coreceptor upon MIK2 perception of SCOOP peptides, and relays the signaling through the activation of receptor-like cytosolic kinases (RLCKs) BIK1 and PBL1. The protein is Somatic embryogenesis receptor kinase 4 of Arabidopsis thaliana (Mouse-ear cress).